The following is an 840-amino-acid chain: Translation initiation factor IF-2 (840 aa).

Over residues 95–143 (RSPDEIEAERQRELEEQRAAEEAERLKAEEAAARQRAEEEARKAEEAAR) the composition is skewed to basic and acidic residues. 2 disordered regions span residues 95-155 (RSPD…ATAG) and 173-256 (PAAV…PTGP). The span at 144–155 (AKAAQEAAATAG) shows a compositional bias: low complexity. Basic and acidic residues-rich tracts occupy residues 175–191 (AVEE…PKRD) and 223–232 (STDEESDGYR). Residues 233–247 (RGGRGGKSKLKKRNQ) show a composition bias toward basic residues. A tr-type G domain is found at 340–509 (TRAPVVTVMG…LLQAEVLELK (170 aa)). The segment at 349–356 (GHVDHGKT) is G1. 349–356 (GHVDHGKT) provides a ligand contact to GTP. Residues 374–378 (GITQH) form a G2 region. Positions 395 to 398 (DTPG) are G3. Residues 395 to 399 (DTPGH) and 449 to 452 (NKID) each bind GTP. A G4 region spans residues 449-452 (NKID). The segment at 485 to 487 (SAK) is G5.

It belongs to the TRAFAC class translation factor GTPase superfamily. Classic translation factor GTPase family. IF-2 subfamily.

It localises to the cytoplasm. In terms of biological role, one of the essential components for the initiation of protein synthesis. Protects formylmethionyl-tRNA from spontaneous hydrolysis and promotes its binding to the 30S ribosomal subunits. Also involved in the hydrolysis of GTP during the formation of the 70S ribosomal complex. This Pseudomonas aeruginosa (strain ATCC 15692 / DSM 22644 / CIP 104116 / JCM 14847 / LMG 12228 / 1C / PRS 101 / PAO1) protein is Translation initiation factor IF-2.